A 1352-amino-acid chain; its full sequence is Inhibitor of Bruton tyrosine kinase (1352 aa).

ANK repeat units follow at residues 51-80 (FGRN…DLLV) and 85-114 (SGWT…SLYM). 3 RCC1 repeats span residues 141–194 (PTEV…FLSQ), 195–246 (KGQV…VLTD), and 248–301 (GCVY…LWTR). The BTB 1 domain maps to 565–645 (HDVTFQVGNR…MYTDTCDLLT (81 aa)). The segment at 692–716 (AHTLSERQKSKPKSSKKGKGVGDDD) is disordered. Over residues 701-710 (SKPKSSKKGK) the composition is skewed to basic residues. The region spanning 769–837 (YDVTMKSVDG…LYTDEAVVIK (69 aa)) is the BTB 2 domain. Residues 976–1002 (FKKAKTRAKKKPRKRSDSSGGYTLSDV) are disordered. The segment covering 977 to 989 (KKAKTRAKKKPRK) has biased composition (basic residues). Ser991 carries the phosphoserine modification. Over residues 993–1002 (SSGGYTLSDV) the composition is skewed to polar residues. Residues Ser1005, Ser1031, Ser1034, Ser1040, Ser1046, Ser1055, Ser1084, Ser1111, Ser1113, and Ser1116 each carry the phosphoserine modification. The tract at residues 1032 to 1094 (EGSYAGVASP…PTTKSAPQFI (63 aa)) is disordered. Residues 1084–1094 (SPTTKSAPQFI) show a composition bias toward polar residues.

In terms of assembly, interacts with the PH domain of BTK.

It localises to the cytoplasm. Its subcellular location is the membrane. Functionally, acts as an inhibitor of BTK tyrosine kinase activity, thereby playing a role in B-cell development. Down-regulates BTK kinase activity, leading to interference with BTK-mediated calcium mobilization and NF-kappa-B-driven transcription. The chain is Inhibitor of Bruton tyrosine kinase (Ibtk) from Mus musculus (Mouse).